The following is a 307-amino-acid chain: UDP-N-acetylenolpyruvoylglucosamine reductase (307 aa).

The 167-residue stretch at 27 to 193 folds into the FAD-binding PCMH-type domain; the sequence is RVGGPADVVF…LDAVFEGLAD (167 aa). Residue R172 is part of the active site. The Proton donor role is filled by S222. E299 is a catalytic residue.

It belongs to the MurB family. FAD serves as cofactor.

The protein resides in the cytoplasm. It catalyses the reaction UDP-N-acetyl-alpha-D-muramate + NADP(+) = UDP-N-acetyl-3-O-(1-carboxyvinyl)-alpha-D-glucosamine + NADPH + H(+). Its pathway is cell wall biogenesis; peptidoglycan biosynthesis. Its function is as follows. Cell wall formation. In Caulobacter sp. (strain K31), this protein is UDP-N-acetylenolpyruvoylglucosamine reductase.